Here is a 431-residue protein sequence, read N- to C-terminus: Hydroxylamine reductase (431 aa).

Residues cysteine 5, cysteine 8, cysteine 17, and cysteine 23 each coordinate [4Fe-4S] cluster. Hybrid [4Fe-2O-2S] cluster contacts are provided by histidine 131, glutamate 155, cysteine 199, cysteine 286, cysteine 314, cysteine 339, glutamate 373, and lysine 375. Cysteine 286 bears the Cysteine persulfide mark.

Belongs to the HCP family. Requires [4Fe-4S] cluster as cofactor. It depends on hybrid [4Fe-2O-2S] cluster as a cofactor.

Its subcellular location is the cytoplasm. It catalyses the reaction A + NH4(+) + H2O = hydroxylamine + AH2 + H(+). In terms of biological role, catalyzes the reduction of hydroxylamine to form NH(3) and H(2)O. The polypeptide is Hydroxylamine reductase (Thermotoga petrophila (strain ATCC BAA-488 / DSM 13995 / JCM 10881 / RKU-1)).